Here is a 662-residue protein sequence, read N- to C-terminus: ABC transporter G family member 17 (662 aa).

An ABC transporter domain is found at 22–276 (LAFNDLTYNV…FSEFGSPIPE (255 aa)). ATP is bound at residue 69–76 (GASGAGKS). Residues 356-566 (VETVILAKRY…PYEAVLHNEF (211 aa)) enclose the ABC transmembrane type-2 domain. The next 6 helical transmembrane spans lie at 375-395 (LIGT…TVYW), 410-430 (FFSF…PAFI), 451-471 (VISH…GFAA), 486-508 (FIYY…TFVS), 514-536 (VMMS…GFYV), and 635-655 (LWVT…SLLL).

The protein belongs to the ABC transporter superfamily. ABCG family. Eye pigment precursor importer (TC 3.A.1.204) subfamily.

The protein resides in the membrane. The polypeptide is ABC transporter G family member 17 (ABCG17) (Arabidopsis thaliana (Mouse-ear cress)).